A 66-amino-acid polypeptide reads, in one-letter code: Large ribosomal subunit protein uL29 (66 aa).

Belongs to the universal ribosomal protein uL29 family.

This Helicobacter pylori (strain HPAG1) protein is Large ribosomal subunit protein uL29.